Here is a 244-residue protein sequence, read N- to C-terminus: 1-(5-phosphoribosyl)-5-[(5-phosphoribosylamino)methylideneamino] imidazole-4-carboxamide isomerase (244 aa).

Catalysis depends on Asp10, which acts as the Proton acceptor. Asp132 acts as the Proton donor in catalysis.

The protein belongs to the HisA/HisF family.

The protein resides in the cytoplasm. It catalyses the reaction 1-(5-phospho-beta-D-ribosyl)-5-[(5-phospho-beta-D-ribosylamino)methylideneamino]imidazole-4-carboxamide = 5-[(5-phospho-1-deoxy-D-ribulos-1-ylimino)methylamino]-1-(5-phospho-beta-D-ribosyl)imidazole-4-carboxamide. It functions in the pathway amino-acid biosynthesis; L-histidine biosynthesis; L-histidine from 5-phospho-alpha-D-ribose 1-diphosphate: step 4/9. This is 1-(5-phosphoribosyl)-5-[(5-phosphoribosylamino)methylideneamino] imidazole-4-carboxamide isomerase from Xanthomonas axonopodis pv. citri (strain 306).